The sequence spans 468 residues: Soluble pyridine nucleotide transhydrogenase (468 aa).

FAD is bound at residue 36 to 45 (ERYKNVGGGC).

This sequence belongs to the class-I pyridine nucleotide-disulfide oxidoreductase family. It depends on FAD as a cofactor.

The protein localises to the cytoplasm. The enzyme catalyses NAD(+) + NADPH = NADH + NADP(+). Its function is as follows. Conversion of NADPH, generated by peripheral catabolic pathways, to NADH, which can enter the respiratory chain for energy generation. This Hamiltonella defensa subsp. Acyrthosiphon pisum (strain 5AT) protein is Soluble pyridine nucleotide transhydrogenase.